A 458-amino-acid chain; its full sequence is MYGKIERIHFVGIGGIGMSGIAEVLLNLGYKVSGSDLRKSEITERLEQLGGEIHLGHTGSNVERADVVVISSAVHDDNPEVIEARERLIPVIPRAEMLAELMRMKYGIAIAGTHGKTTTTSMVATILATGGIDPTIVIGGRLNSIGTNARLGQGKFLVAEADESDGSFLKLSPTIAVVTNIDADHLDFYSGIEEIKDTFVEFINKIPFYGLAVLCLDNGNVADIIPLVKKRFTTYGLTAQADFRATEIRHEGFTTSFVAHYKGQKLGEISFNMPGAHNVLNALATIAVATELDMRFEDIQAGFKSFGGVGRRFQVKGEVNGIMVVDDYGHHPTEIKATLAAAKGGWDRRLVVVFQPHRYTRTKELFEEFVKAFYDADILILTDIYPAGEQPIEGVTAEALSARIKRHGQREVTFVADRNKVCDHLLSIVKEGDIVLTLGAGNILQAGEQLVEKLREAP.

112 to 118 lines the ATP pocket; that stretch reads GTHGKTT.

It belongs to the MurCDEF family.

It localises to the cytoplasm. The catalysed reaction is UDP-N-acetyl-alpha-D-muramate + L-alanine + ATP = UDP-N-acetyl-alpha-D-muramoyl-L-alanine + ADP + phosphate + H(+). It participates in cell wall biogenesis; peptidoglycan biosynthesis. In terms of biological role, cell wall formation. The chain is UDP-N-acetylmuramate--L-alanine ligase from Geotalea daltonii (strain DSM 22248 / JCM 15807 / FRC-32) (Geobacter daltonii).